A 1868-amino-acid chain; its full sequence is Dedicator of cytokinesis protein 5 (1868 aa).

In terms of domain architecture, SH3 spans Lys-8–Ala-69. Position 365 is a phosphoserine (Ser-365). Positions Arg-443–Cys-627 constitute a C2 DOCK-type domain. Residue Lys-818 is modified to N6-acetyllysine. Residues Tyr-1231–Leu-1642 form the DOCKER domain. Positions Ser-1681 to Ser-1692 are enriched in low complexity. 2 disordered regions span residues Ser-1681 to Lys-1730 and Gln-1742 to Gln-1868. A compositionally biased stretch (basic and acidic residues) spans Leu-1704–Ile-1728. 5 positions are modified to phosphoserine: Ser-1755, Ser-1765, Ser-1771, Ser-1784, and Ser-1788. At Thr-1793 the chain carries Phosphothreonine. A compositionally biased stretch (polar residues) spans Ala-1796–Leu-1810. A phosphoserine mark is found at Ser-1832 and Ser-1867.

The protein belongs to the DOCK family. Interacts with CRK and CRKL. Interacts (via N-terminus) with tensin TNS3 (via N-terminus); the interaction increases DOCK5 guanine nucleotide exchange activity towards Rac. Interacts with ELMO1. As to expression, highly expressed in lens, where it predominantly localizes to anterior epithelial cells, and is weakly expressed in lens fiber (at protein level). Expressed in brain, eye, lung, spleen and kidney, but not in thymus or peripheral blood leukocytes.

It localises to the cytoplasm. It is found in the cell membrane. Its subcellular location is the cell projection. The protein resides in the podosome. In terms of biological role, guanine nucleotide exchange factor (GEF) for Rho and Rac. GEF proteins activate small GTPases by exchanging bound GDP for free GTP. Along with DOCK1, mediates CRK/CRKL regulation of epithelial and endothelial cell spreading and migration on type IV collagen. The protein is Dedicator of cytokinesis protein 5 of Mus musculus (Mouse).